We begin with the raw amino-acid sequence, 219 residues long: Ribose-5-phosphate isomerase A (219 aa).

Residues 28–31, 81–84, and 94–97 each bind substrate; these read TGST, DSAD, and KGGG. The Proton acceptor role is filled by Glu-103. Lys-121 is a binding site for substrate.

It belongs to the ribose 5-phosphate isomerase family. In terms of assembly, homodimer.

It carries out the reaction aldehydo-D-ribose 5-phosphate = D-ribulose 5-phosphate. It participates in carbohydrate degradation; pentose phosphate pathway; D-ribose 5-phosphate from D-ribulose 5-phosphate (non-oxidative stage): step 1/1. Its function is as follows. Catalyzes the reversible conversion of ribose-5-phosphate to ribulose 5-phosphate. This is Ribose-5-phosphate isomerase A from Buchnera aphidicola subsp. Schizaphis graminum (strain Sg).